Consider the following 350-residue polypeptide: Phosphotriesterase-related protein (350 aa).

Residues H22, H24, E169, H201, H230, and D298 each coordinate a divalent metal cation.

It belongs to the metallo-dependent hydrolases superfamily. Phosphotriesterase family. A divalent metal cation is required as a cofactor.

The polypeptide is Phosphotriesterase-related protein (Drosophila yakuba (Fruit fly)).